A 466-amino-acid chain; its full sequence is Asparagine--tRNA ligase (466 aa).

Belongs to the class-II aminoacyl-tRNA synthetase family. Homodimer.

It is found in the cytoplasm. The enzyme catalyses tRNA(Asn) + L-asparagine + ATP = L-asparaginyl-tRNA(Asn) + AMP + diphosphate + H(+). The chain is Asparagine--tRNA ligase from Photorhabdus laumondii subsp. laumondii (strain DSM 15139 / CIP 105565 / TT01) (Photorhabdus luminescens subsp. laumondii).